The sequence spans 214 residues: Glycerol-3-phosphate acyltransferase (214 aa).

The next 5 membrane-spanning stretches (helical) occupy residues 4 to 24 (LIVA…IVSA), 52 to 72 (AAIL…WFVV), 82 to 102 (DTSV…PAFF), 118 to 138 (LAIN…VAFF), and 159 to 179 (FLFG…LLVW).

Belongs to the PlsY family. As to quaternary structure, probably interacts with PlsX.

It is found in the cell inner membrane. It catalyses the reaction an acyl phosphate + sn-glycerol 3-phosphate = a 1-acyl-sn-glycero-3-phosphate + phosphate. It participates in lipid metabolism; phospholipid metabolism. Its function is as follows. Catalyzes the transfer of an acyl group from acyl-phosphate (acyl-PO(4)) to glycerol-3-phosphate (G3P) to form lysophosphatidic acid (LPA). This enzyme utilizes acyl-phosphate as fatty acyl donor, but not acyl-CoA or acyl-ACP. The chain is Glycerol-3-phosphate acyltransferase from Paraburkholderia xenovorans (strain LB400).